The following is a 203-amino-acid chain: Secreted RxLR effector protein RXLR-C28 (203 aa).

Residues 1-24 (MKAVKLTAAVVVLFMAPYVPITSS) form the signal peptide. Residue asparagine 32 is glycosylated (N-linked (GlcNAc...) asparagine). A RxLR motif is present at residues 37–40 (RHLR). N-linked (GlcNAc...) asparagine glycosylation is present at asparagine 193.

It belongs to the RxLR effector family.

It localises to the secreted. It is found in the host cytoplasm. Secreted effector that does not suppress pattern-triggered immunity (PTI) in plant host. The sequence is that of Secreted RxLR effector protein RXLR-C28 from Plasmopara halstedii (Downy mildew of sunflower).